We begin with the raw amino-acid sequence, 128 residues long: L-ectoine synthase (128 aa).

Belongs to the ectoine synthase family.

It carries out the reaction (2S)-4-acetamido-2-aminobutanoate = L-ectoine + H2O. It participates in amine and polyamine biosynthesis; ectoine biosynthesis; L-ectoine from L-aspartate 4-semialdehyde: step 3/3. Catalyzes the circularization of gamma-N-acetyl-alpha,gamma-diaminobutyric acid (ADABA) to ectoine (1,4,5,6-tetrahydro-2-methyl-4-pyrimidine carboxylic acid), which is an excellent osmoprotectant. In Vibrio atlanticus (strain LGP32) (Vibrio splendidus (strain Mel32)), this protein is L-ectoine synthase.